Consider the following 816-residue polypeptide: Protein kinase C-binding protein NELL2 (816 aa).

Positions 1–21 (MESRVLLRTFCLIFGLGAVWG) are cleaved as a signal peptide. Residues Asn-53, Asn-225, Asn-293, and Asn-298 are each glycosylated (N-linked (GlcNAc...) asparagine). Residues 64-228 (PRSVKASTAT…AQCPDLNRTC (165 aa)) form the Laminin G-like domain. One can recognise a VWFC 1 domain in the interval 272–331 (RTCTMKGTTYREFESWIDGCKNCTCLNGTIQCETLICPNPDCPLNSALAYVDGKCCKECK). The EGF-like 1 domain occupies 397 to 439 (GYDFCSERHNCMENSVCRNLNDRAVCSCRDGFRALREDNAYCE). Cystine bridges form between Cys-401–Cys-413, Cys-407–Cys-422, and Cys-424–Cys-438. Ca(2+) contacts are provided by Asp-440, Ile-441, and Glu-443. In terms of domain architecture, EGF-like 2; calcium-binding spans 440 to 481 (DIDECAEGRHYCRENTMCVNTPGSFMCICKTGYIRIDDYSCT). 9 cysteine pairs are disulfide-bonded: Cys-444/Cys-457, Cys-451/Cys-466, Cys-468/Cys-480, Cys-486/Cys-499, Cys-493/Cys-508, Cys-510/Cys-521, Cys-525/Cys-535, Cys-529/Cys-541, and Cys-543/Cys-552. Asn-459, Thr-460, and Ser-463 together coordinate Ca(2+). The 41-residue stretch at 482-522 (EHDECITNQHNCDENALCFNTVGGHNCVCKPGYTGNGTTCK) folds into the EGF-like 3; calcium-binding domain. N-linked (GlcNAc...) asparagine glycosylation is present at Asn-517. Residues 523–553 (AFCKDGCRNGGACIAANVCACPQGFTGPSCE) enclose the EGF-like 4 domain. O-linked (GlcNAc...) threonine glycosylation is present at Thr-548. Residues Asp-555, Ile-556, and Glu-558 each contribute to the Ca(2+) site. The EGF-like 5; calcium-binding domain occupies 555–601 (DIDECSDGFVQCDSRANCINLPGWYHCECRDGYHDNGMFSPSGESCE). Cystine bridges form between Cys-559–Cys-572, Cys-566–Cys-581, and Cys-583–Cys-600. Ca(2+) contacts are provided by Asn-574, Leu-575, and Trp-578. Asp-602, Ile-603, and Glu-605 together coordinate Ca(2+). The EGF-like 6; calcium-binding domain occupies 602 to 637 (DIDECGTGRHSCANDTICFNLDGGYDCRCPHGKNCT). Disulfide bonds link Cys-606-Cys-619, Cys-613-Cys-628, and Cys-630-Cys-636. An N-linked (GlcNAc...) asparagine glycan is attached at Asn-615. Residues Asn-621, Leu-622, and Gly-625 each contribute to the Ca(2+) site. An N-linked (GlcNAc...) asparagine glycan is attached at Asn-635. VWFC domains are found at residues 638–693 (GDCI…PECD) and 698–756 (SQCL…PRCV).

As to quaternary structure, homotrimer. Binds to PRKCB. Interacts with NICOL1; this interaction triggers epididymal differentiation.

It localises to the secreted. Plays multiple roles in neural tissues, regulates neuronal proliferation, survival, differentiation, polarization, as well as axon guidance and synaptic functions. Plays an important role in axon development during neuronal differentiation through the MAPK intracellular signaling pathway. Via binding to its receptor ROBO3, plays a role in axon guidance, functions as a repulsive guidance cue for commissural axons, helping to steer them across the spinal cord midline. Required for neuron survival through the modulation of MAPK signaling pathways too. Involved in the regulation of hypothalamic GNRH secretion and the control of puberty. Its function is as follows. Testicular luminal protein that signals through a ROS1-pathway to regulate the epididymal initial segment (IS) maturation, sperm maturation and male fertility. The protein is Protein kinase C-binding protein NELL2 (NELL2) of Pongo abelii (Sumatran orangutan).